A 367-amino-acid chain; its full sequence is Alanine racemase (367 aa).

K34 (proton acceptor; specific for D-alanine) is an active-site residue. At K34 the chain carries N6-(pyridoxal phosphate)lysine. Substrate is bound at residue R129. The active-site Proton acceptor; specific for L-alanine is Y251. Residue M299 coordinates substrate.

It belongs to the alanine racemase family. Requires pyridoxal 5'-phosphate as cofactor.

It carries out the reaction L-alanine = D-alanine. Its pathway is amino-acid biosynthesis; D-alanine biosynthesis; D-alanine from L-alanine: step 1/1. Its function is as follows. Catalyzes the interconversion of L-alanine and D-alanine. May also act on other amino acids. The polypeptide is Alanine racemase (alr) (Thiobacillus denitrificans (strain ATCC 25259 / T1)).